A 546-amino-acid chain; its full sequence is Elongator complex protein 3 (546 aa).

The 291-residue stretch at 81–371 (RTASGIAVVA…YRVQRDIPMP (291 aa)) folds into the Radical SAM core domain. Residues cysteine 98, cysteine 108, and cysteine 111 each contribute to the [4Fe-4S] cluster site. Residues lysine 163, 473 to 476 (ELHV), 496 to 498 (FGM), and tyrosine 529 each bind acetyl-CoA. The 152-residue stretch at 395 to 546 (TQCRDVRTRE…EGPYMVKRLQ (152 aa)) folds into the N-acetyltransferase domain.

The protein belongs to the ELP3 family. In terms of assembly, component of the elongator complex. It depends on [4Fe-4S] cluster as a cofactor.

It is found in the cytoplasm. The protein localises to the nucleus. The enzyme catalyses uridine(34) in tRNA + acetyl-CoA + S-adenosyl-L-methionine + H2O = 5-(carboxymethyl)uridine(34) in tRNA + 5'-deoxyadenosine + L-methionine + CoA + 2 H(+). It functions in the pathway tRNA modification; 5-methoxycarbonylmethyl-2-thiouridine-tRNA biosynthesis. Catalytic tRNA acetyltransferase subunit of the elongator complex which is required for multiple tRNA modifications, including mcm5U (5-methoxycarbonylmethyl uridine), mcm5s2U (5-methoxycarbonylmethyl-2-thiouridine), and ncm5U (5-carbamoylmethyl uridine). In the elongator complex, acts as a tRNA uridine(34) acetyltransferase by mediating formation of carboxymethyluridine in the wobble base at position 34 in tRNAs. This chain is Elongator complex protein 3, found in Gallus gallus (Chicken).